The following is a 130-amino-acid chain: Small ribosomal subunit protein uS8 (130 aa).

This sequence belongs to the universal ribosomal protein uS8 family. In terms of assembly, part of the 30S ribosomal subunit. Contacts proteins S5 and S12.

In terms of biological role, one of the primary rRNA binding proteins, it binds directly to 16S rRNA central domain where it helps coordinate assembly of the platform of the 30S subunit. In Pseudoalteromonas translucida (strain TAC 125), this protein is Small ribosomal subunit protein uS8.